The following is a 274-amino-acid chain: Thiamine kinase (274 aa).

This sequence belongs to the thiamine kinase family.

It carries out the reaction thiamine + ATP = thiamine phosphate + ADP + H(+). It functions in the pathway cofactor biosynthesis; thiamine diphosphate biosynthesis; thiamine phosphate from thiamine: step 1/1. Its function is as follows. Catalyzes the ATP-dependent phosphorylation of thiamine to thiamine phosphate. Is involved in thiamine salvage. This Salmonella newport (strain SL254) protein is Thiamine kinase.